The primary structure comprises 351 residues: Protein-glutamate methylesterase/protein-glutamine glutaminase (351 aa).

A Response regulatory domain is found at 6-123 (RVLVVDDSPT…ARPFGDLADK (118 aa)). Asp57 is modified (4-aspartylphosphate). The CheB-type methylesterase domain maps to 154–346 (YRAGRKVVAI…EEILKLTTAR (193 aa)). Catalysis depends on residues Ser166, His192, and Asp288.

Belongs to the CheB family. In terms of processing, phosphorylated by CheA. Phosphorylation of the N-terminal regulatory domain activates the methylesterase activity.

The protein localises to the cytoplasm. The enzyme catalyses [protein]-L-glutamate 5-O-methyl ester + H2O = L-glutamyl-[protein] + methanol + H(+). The catalysed reaction is L-glutaminyl-[protein] + H2O = L-glutamyl-[protein] + NH4(+). Its function is as follows. Involved in chemotaxis. Part of a chemotaxis signal transduction system that modulates chemotaxis in response to various stimuli. Catalyzes the demethylation of specific methylglutamate residues introduced into the chemoreceptors (methyl-accepting chemotaxis proteins or MCP) by CheR. Also mediates the irreversible deamidation of specific glutamine residues to glutamic acid. The sequence is that of Protein-glutamate methylesterase/protein-glutamine glutaminase from Agrobacterium fabrum (strain C58 / ATCC 33970) (Agrobacterium tumefaciens (strain C58)).